We begin with the raw amino-acid sequence, 95 residues long: CRISPR-associated endoribonuclease Cas2 1 (95 aa).

Asp-11 contributes to the Mg(2+) binding site.

It belongs to the CRISPR-associated endoribonuclease Cas2 protein family. Homodimer, forms a heterotetramer with a Cas1 homodimer. Requires Mg(2+) as cofactor.

CRISPR (clustered regularly interspaced short palindromic repeat), is an adaptive immune system that provides protection against mobile genetic elements (viruses, transposable elements and conjugative plasmids). CRISPR clusters contain sequences complementary to antecedent mobile elements and target invading nucleic acids. CRISPR clusters are transcribed and processed into CRISPR RNA (crRNA). Functions as a ssRNA-specific endoribonuclease. Involved in the integration of spacer DNA into the CRISPR cassette. The polypeptide is CRISPR-associated endoribonuclease Cas2 1 (Methanospirillum hungatei JF-1 (strain ATCC 27890 / DSM 864 / NBRC 100397 / JF-1)).